The following is a 183-amino-acid chain: Neuroblastoma suppressor of tumorigenicity 1 (183 aa).

A signal peptide spans 1–19 (MVMCVRAVLVCVLLELSRA). 5 cysteine pairs are disulfide-bonded: Cys38/Cys88, Cys52/Cys102, Cys62/Cys121, Cys66/Cys123, and Cys85/Cys126. One can recognise a CTCK domain in the interval 38–127 (CEAKNITQIV…ILHCSCQSCS (90 aa)). A disordered region spans residues 145–170 (AQDLPSLPDATHTHPQHAHMQADQRD).

This sequence belongs to the DAN family.

The protein localises to the secreted. May act as a tumor suppressor. The polypeptide is Neuroblastoma suppressor of tumorigenicity 1 (nbl1) (Danio rerio (Zebrafish)).